Reading from the N-terminus, the 314-residue chain is MRPLTIIGPTGTGKSDLAIEIADRLSGKIAVEIVNADAYQLYRGMDIGTGKVPLAQRRGIPHHQLDVLDVTETATVAGYQRSAAADIEAIASRGALPLLVGGSMLYVQSLLDDWAFPAKDPAIRARWERRLAQVGPARLHAELVRRDPAAAAVIPLNDARRTVRALEVVEITGRPYAASAPRIGSPRWDSAIIGLDCETKVLDERLAARTKAMFDRGLIEEVISLLPCGLARGVTASRALGYAQVMEALKAGADTQALDSARQQTCLATRRYVRRQRSWFRRDRRVRWLDATVSTAAHRTAIIEAVLGAWRRAS.

Residue 8-15 (GPTGTGKS) participates in ATP binding. Residue 10 to 15 (TGTGKS) participates in substrate binding.

The protein belongs to the IPP transferase family. Monomer. Mg(2+) serves as cofactor.

It carries out the reaction adenosine(37) in tRNA + dimethylallyl diphosphate = N(6)-dimethylallyladenosine(37) in tRNA + diphosphate. Catalyzes the transfer of a dimethylallyl group onto the adenine at position 37 in tRNAs that read codons beginning with uridine, leading to the formation of N6-(dimethylallyl)adenosine (i(6)A). This is tRNA dimethylallyltransferase 1 from Mycobacterium marinum (strain ATCC BAA-535 / M).